We begin with the raw amino-acid sequence, 282 residues long: Parvulin-like PPIase (282 aa).

A signal peptide spans Met1–Ala20. In terms of domain architecture, PpiC spans Lys138–Glu231.

It belongs to the PpiC/parvulin rotamase family.

Its subcellular location is the cell outer membrane. It catalyses the reaction [protein]-peptidylproline (omega=180) = [protein]-peptidylproline (omega=0). The sequence is that of Parvulin-like PPIase (plp) from Rickettsia felis (strain ATCC VR-1525 / URRWXCal2) (Rickettsia azadi).